A 227-amino-acid polypeptide reads, in one-letter code: Cytochrome c oxidase subunit 2 (227 aa).

Residues 1–14 lie on the Mitochondrial intermembrane side of the membrane; that stretch reads MAYSFQLGLQDATS. The chain crosses the membrane as a helical span at residues 15–45; the sequence is PIMEELMNFHDHTLMIVFLISSLVLYIISLM. Topologically, residues 46–59 are mitochondrial matrix; it reads LTTKLTHTSTMDAQ. The helical transmembrane segment at 60–87 threads the bilayer; it reads EVETIWTILPAVILIMIALPSLRILYMM. The Mitochondrial intermembrane segment spans residues 88 to 227; that stretch reads DEINNPVLTV…HFENWSASMI (140 aa). Residues histidine 161, cysteine 196, glutamate 198, cysteine 200, histidine 204, and methionine 207 each contribute to the Cu cation site. Glutamate 198 provides a ligand contact to Mg(2+).

This sequence belongs to the cytochrome c oxidase subunit 2 family. Component of the cytochrome c oxidase (complex IV, CIV), a multisubunit enzyme composed of 14 subunits. The complex is composed of a catalytic core of 3 subunits MT-CO1, MT-CO2 and MT-CO3, encoded in the mitochondrial DNA, and 11 supernumerary subunits COX4I, COX5A, COX5B, COX6A, COX6B, COX6C, COX7A, COX7B, COX7C, COX8 and NDUFA4, which are encoded in the nuclear genome. The complex exists as a monomer or a dimer and forms supercomplexes (SCs) in the inner mitochondrial membrane with NADH-ubiquinone oxidoreductase (complex I, CI) and ubiquinol-cytochrome c oxidoreductase (cytochrome b-c1 complex, complex III, CIII), resulting in different assemblies (supercomplex SCI(1)III(2)IV(1) and megacomplex MCI(2)III(2)IV(2)). Found in a complex with TMEM177, COA6, COX18, COX20, SCO1 and SCO2. Interacts with TMEM177 in a COX20-dependent manner. Interacts with COX20. Interacts with COX16. It depends on Cu cation as a cofactor.

The protein localises to the mitochondrion inner membrane. It catalyses the reaction 4 Fe(II)-[cytochrome c] + O2 + 8 H(+)(in) = 4 Fe(III)-[cytochrome c] + 2 H2O + 4 H(+)(out). In terms of biological role, component of the cytochrome c oxidase, the last enzyme in the mitochondrial electron transport chain which drives oxidative phosphorylation. The respiratory chain contains 3 multisubunit complexes succinate dehydrogenase (complex II, CII), ubiquinol-cytochrome c oxidoreductase (cytochrome b-c1 complex, complex III, CIII) and cytochrome c oxidase (complex IV, CIV), that cooperate to transfer electrons derived from NADH and succinate to molecular oxygen, creating an electrochemical gradient over the inner membrane that drives transmembrane transport and the ATP synthase. Cytochrome c oxidase is the component of the respiratory chain that catalyzes the reduction of oxygen to water. Electrons originating from reduced cytochrome c in the intermembrane space (IMS) are transferred via the dinuclear copper A center (CU(A)) of subunit 2 and heme A of subunit 1 to the active site in subunit 1, a binuclear center (BNC) formed by heme A3 and copper B (CU(B)). The BNC reduces molecular oxygen to 2 water molecules using 4 electrons from cytochrome c in the IMS and 4 protons from the mitochondrial matrix. The protein is Cytochrome c oxidase subunit 2 (MT-CO2) of Praomys jacksoni (African forest rat).